The chain runs to 98 residues: NADH-ubiquinone oxidoreductase chain 4L (98 aa).

A run of 3 helical transmembrane segments spans residues 1 to 21, 29 to 49, and 61 to 81; these read MTLIHMNILMAFSMSLMGLLM, ALLCLEGMMLSLFVLAALTIL, and IILLVFAACEAAIGLALLVMV.

It belongs to the complex I subunit 4L family. As to quaternary structure, core subunit of respiratory chain NADH dehydrogenase (Complex I) which is composed of 45 different subunits.

Its subcellular location is the mitochondrion inner membrane. It carries out the reaction a ubiquinone + NADH + 5 H(+)(in) = a ubiquinol + NAD(+) + 4 H(+)(out). Core subunit of the mitochondrial membrane respiratory chain NADH dehydrogenase (Complex I) which catalyzes electron transfer from NADH through the respiratory chain, using ubiquinone as an electron acceptor. Part of the enzyme membrane arm which is embedded in the lipid bilayer and involved in proton translocation. The chain is NADH-ubiquinone oxidoreductase chain 4L (MT-ND4L) from Balaenoptera physalus (Fin whale).